The primary structure comprises 96 residues: Dynein light chain roadblock-type 2 (96 aa).

Residue A2 is modified to N-acetylalanine.

This sequence belongs to the GAMAD family. In terms of assembly, homodimer. The cytoplasmic dynein 1 complex consists of two catalytic heavy chains (HCs) and a number of non-catalytic subunits presented by intermediate chains (ICs), light intermediate chains (LICs) and light chains (LCs); the composition seems to vary in respect to the IC, LIC and LC composition. The heavy chain homodimer serves as a scaffold for the probable homodimeric assembly of the respective non-catalytic subunits. The ICs and LICs bind directly to the HC dimer and the LCs assemble on the IC dimer. Interacts with DYNC1I1 and DYNC1I2. Self-associates. Interacts with DYNLRB1.

The protein resides in the cytoplasm. The protein localises to the cytoskeleton. Functionally, acts as one of several non-catalytic accessory components of the cytoplasmic dynein 1 complex that are thought to be involved in linking dynein to cargos and to adapter proteins that regulate dynein function. Cytoplasmic dynein 1 acts as a motor for the intracellular retrograde motility of vesicles and organelles along microtubules. In Bos taurus (Bovine), this protein is Dynein light chain roadblock-type 2 (DYNLRB2).